The chain runs to 112 residues: Phosphoribosyl-ATP pyrophosphatase (112 aa).

This sequence belongs to the PRA-PH family.

The protein resides in the cytoplasm. The enzyme catalyses 1-(5-phospho-beta-D-ribosyl)-ATP + H2O = 1-(5-phospho-beta-D-ribosyl)-5'-AMP + diphosphate + H(+). The protein operates within amino-acid biosynthesis; L-histidine biosynthesis; L-histidine from 5-phospho-alpha-D-ribose 1-diphosphate: step 2/9. This Chromohalobacter salexigens (strain ATCC BAA-138 / DSM 3043 / CIP 106854 / NCIMB 13768 / 1H11) protein is Phosphoribosyl-ATP pyrophosphatase.